Here is a 321-residue protein sequence, read N- to C-terminus: MINLFLLKYKTAFSTFLKPFAYLSLILSVCFYSIQAQAFPVFAQQAYENPREATGRIVCANCHLAQKPVEIEVPQAVLPDTVFEAVVEVPYDLSLQQVTGNGTKGPLNVGAVVILPEGFTLAPKDRISSELKEKTKGLIITPYNEANPNILVVGPVPGKDHQKLVFPVLSPNPAENKNVHFIKYPVYVGANRGRGQVNPTGEKSNNTVYTSPIDGQIVKLEKSDNVTSFSIKSKTGDIITVKVPFGPDILVKEGQTLVADQQLTNDPNVGGFGQVETEIVLQSPARVKGLIAFFFTVILAQILLVLKKKQFEKVQLAEMNF.

An N-terminal signal peptide occupies residues 1-38; it reads MINLFLLKYKTAFSTFLKPFAYLSLILSVCFYSIQAQA. 4 residues coordinate heme: Phe-39, Cys-59, Cys-62, and His-63. A helical transmembrane segment spans residues 287–306; that stretch reads VKGLIAFFFTVILAQILLVL.

The protein belongs to the cytochrome f family. The 4 large subunits of the cytochrome b6-f complex are cytochrome b6, subunit IV (17 kDa polypeptide, petD), cytochrome f and the Rieske protein, while the 4 small subunits are PetG, PetL, PetM and PetN. The complex functions as a dimer. Requires heme as cofactor.

Its subcellular location is the plastid. It is found in the chloroplast thylakoid membrane. Its function is as follows. Component of the cytochrome b6-f complex, which mediates electron transfer between photosystem II (PSII) and photosystem I (PSI), cyclic electron flow around PSI, and state transitions. This is Cytochrome f (petA) from Guillardia theta (Cryptophyte).